A 634-amino-acid polypeptide reads, in one-letter code: 3-dehydroshikimate dehydratase (634 aa).

Positions 134, 165, 191, and 239 each coordinate a divalent metal cation. 2 consecutive VOC domains span residues 295 to 414 (GIEF…LVER) and 440 to 590 (RVDH…VFTE). Residues His443, His521, and Glu599 each coordinate Mg(2+).

Belongs to the bacterial two-domain DSD family. In terms of assembly, homodimer. Co(2+) is required as a cofactor. Ni(2+) serves as cofactor. The cofactor is Mg(2+). It depends on Mn(2+) as a cofactor.

The enzyme catalyses 3-dehydroshikimate = 3,4-dihydroxybenzoate + H2O. It participates in aromatic compound metabolism; 3,4-dihydroxybenzoate biosynthesis. Its function is as follows. Catalyzes the conversion of 3-dehydroshikimate to protocatechuate (3,4-dihydroxybenzoate), a common intermediate of quinate and shikimate degradation pathways. Is required for growth on either quinate or shikimate as a sole carbon source. In Pseudomonas aeruginosa (strain ATCC 15692 / DSM 22644 / CIP 104116 / JCM 14847 / LMG 12228 / 1C / PRS 101 / PAO1), this protein is 3-dehydroshikimate dehydratase.